Here is a 222-residue protein sequence, read N- to C-terminus: 2-C-methyl-D-erythritol 4-phosphate cytidylyltransferase (222 aa).

This sequence belongs to the IspD/TarI cytidylyltransferase family. IspD subfamily.

The enzyme catalyses 2-C-methyl-D-erythritol 4-phosphate + CTP + H(+) = 4-CDP-2-C-methyl-D-erythritol + diphosphate. Its pathway is isoprenoid biosynthesis; isopentenyl diphosphate biosynthesis via DXP pathway; isopentenyl diphosphate from 1-deoxy-D-xylulose 5-phosphate: step 2/6. In terms of biological role, catalyzes the formation of 4-diphosphocytidyl-2-C-methyl-D-erythritol from CTP and 2-C-methyl-D-erythritol 4-phosphate (MEP). This Thermotoga neapolitana (strain ATCC 49049 / DSM 4359 / NBRC 107923 / NS-E) protein is 2-C-methyl-D-erythritol 4-phosphate cytidylyltransferase.